We begin with the raw amino-acid sequence, 244 residues long: uncharacterized protein (244 aa).

The disordered stretch occupies residues 30-49 (RETNESPKSQNPSEEATTVN). The segment covering 35–49 (SPKSQNPSEEATTVN) has biased composition (polar residues). 4 consecutive transmembrane segments (helical) span residues 96-116 (LWGT…LSNS), 128-148 (LLFI…FGLF), 171-191 (GFFI…TIAF), and 194-214 (FVTI…HPLS). A disordered region spans residues 224–244 (QLDGSGERKTDSSLVHQNPPN). The span at 235 to 244 (SSLVHQNPPN) shows a compositional bias: polar residues.

The protein localises to the nucleus membrane. This is an uncharacterized protein from Schizosaccharomyces pombe (strain 972 / ATCC 24843) (Fission yeast).